We begin with the raw amino-acid sequence, 723 residues long: MSKMRVYEYAKKHNVSSKDVIHKLKEMNIDVSNHMTMIEADVVEQLDRSFSKEQKQELKKEEKKAPVKTPVLEQFEEDEDEVIQTKVPIKKAVVKNREGKKHDLQIQQKEKKIFNNKKNKKQKPQQAPQQEVQKKKEKELPKKITFEGSLTVAELAKKLGKEPSEIIKKLFMLGIIATINKDLDKDAIELICSDYGVEVEEKVTIDETEFETIEIVDNPEDLVERPPVVTIMGHVDHGKTTLLDSIRQTKVTEQEAGGITQHIGAYQVVVNGKKITFLDTPGHEAFTTMRARGAQVTDIVILVVAADDGVMPQTVEAINHAKAAKVPIIVAVNKIDKPTANPDRVMQELMEYELVPEEWGGDTIYCKLSALTGEGIDNLLEMILLVSEMEELKANPNRRATGTVIEAKLDKGRGPVATLLVQSGTLRVGDPIVVGYTYGRVRAMTNDLGRRVKEAGPSTPVEITGLNEVPQAGDRFMVFEDEKKARQIGEARAQKQIVQQRSVKARVSLDDLFEKIKQGEMKELNIIVKADVQGSVEALVAALQKIEVEGVRVKIIHSGVGAVTEYDIMLASASNAIVIGFNVRPDANAKRVAEAEKVDIRLHRIIYKVIEEIEAAMKGMLDPEYEEKVIGQAEVRQTFKVSKVGTIAGCYVTDGKITRDSSVRLIRQGIVVYEGQIDTLKRYKDDVKEVAQGYECGITIKNFNDIKEGDVIEAYVMQEVARK.

Positions 112–138 are disordered; the sequence is KIFNNKKNKKQKPQQAPQQEVQKKKEK. Residues 114–123 show a composition bias toward basic residues; sequence FNNKKNKKQK. The 170-residue stretch at 224–393 folds into the tr-type G domain; the sequence is ERPPVVTIMG…LLVSEMEELK (170 aa). A G1 region spans residues 233-240; sequence GHVDHGKT. 233–240 is a GTP binding site; the sequence is GHVDHGKT. The G2 stretch occupies residues 258–262; sequence GITQH. A G3 region spans residues 279 to 282; that stretch reads DTPG. Residues 279–283 and 333–336 each bind GTP; these read DTPGH and NKID. The interval 333–336 is G4; it reads NKID. Residues 369-371 form a G5 region; it reads SAL.

This sequence belongs to the TRAFAC class translation factor GTPase superfamily. Classic translation factor GTPase family. IF-2 subfamily.

It localises to the cytoplasm. In terms of biological role, one of the essential components for the initiation of protein synthesis. Protects formylmethionyl-tRNA from spontaneous hydrolysis and promotes its binding to the 30S ribosomal subunits. Also involved in the hydrolysis of GTP during the formation of the 70S ribosomal complex. This chain is Translation initiation factor IF-2, found in Anoxybacillus flavithermus (strain DSM 21510 / WK1).